Consider the following 406-residue polypeptide: Aminomethyltransferase, mitochondrial (406 aa).

Residues 1–29 (MRGGLWQLGQSITRRLAQADKKTIGRRCF) constitute a mitochondrion transit peptide. Substrate is bound by residues glutamate 234, arginine 265, and tyrosine 403.

Belongs to the GcvT family. The glycine cleavage system is composed of four proteins: P, T, L and H.

Its subcellular location is the mitochondrion. It catalyses the reaction N(6)-[(R)-S(8)-aminomethyldihydrolipoyl]-L-lysyl-[protein] + (6S)-5,6,7,8-tetrahydrofolate = N(6)-[(R)-dihydrolipoyl]-L-lysyl-[protein] + (6R)-5,10-methylene-5,6,7,8-tetrahydrofolate + NH4(+). Its function is as follows. The glycine cleavage system catalyzes the degradation of glycine. The protein is Aminomethyltransferase, mitochondrial (GDCST) of Solanum tuberosum (Potato).